An 846-amino-acid chain; its full sequence is FNIP repeat-containing protein DDB_G0289381 (846 aa).

Residues Met-1–Ser-11 are compositionally biased toward basic residues. The disordered stretch occupies residues Met-1 to Asp-39. A compositionally biased stretch (basic and acidic residues) spans Asp-20–Lys-33. 4 FNIP repeats span residues Ile-159–Lys-193, Phe-194–Asn-239, Phe-240–Asn-283, and Phe-284–Asp-325. A disordered region spans residues Ser-362–Thr-384. 3 FNIP repeats span residues Phe-458 to Gly-500, Phe-501 to Ser-546, and Phe-654 to Lys-693. Residues Ser-702 to Ser-734 form a disordered region. Residues Ser-702–Ser-734 are a coiled coil.

The chain is FNIP repeat-containing protein DDB_G0289381 from Dictyostelium discoideum (Social amoeba).